The primary structure comprises 321 residues: 4-hydroxy-2-oxoglutarate aldolase, mitochondrial (321 aa).

Residues Met-1 to Lys-23 constitute a mitochondrion transit peptide. Ser-71–Thr-72 is a binding site for substrate. The active-site Schiff-base intermediate with substrate is Lys-190. Substrate is bound by residues Ser-192 and Gly-216.

The protein belongs to the DapA family. In terms of assembly, homotetramer.

It localises to the mitochondrion. The enzyme catalyses (4S)-4-hydroxy-2-oxoglutarate = glyoxylate + pyruvate. It carries out the reaction (4R)-4-hydroxy-2-oxoglutarate = glyoxylate + pyruvate. With respect to regulation, inhibited by divalent cations. Its function is as follows. Catalyzes the final step in the metabolic pathway of hydroxyproline. This chain is 4-hydroxy-2-oxoglutarate aldolase, mitochondrial (Hoga1), found in Mus musculus (Mouse).